A 354-amino-acid chain; its full sequence is DNA integrity scanning protein DisA (354 aa).

The DAC domain occupies 6–144; it reads DDELKKILKI…GDIKYVLRDS (139 aa). Residues G73, L91, and 104-108 contribute to the ATP site; that span reads TRHRT.

This sequence belongs to the DisA family. As to quaternary structure, homooctamer. Mg(2+) is required as a cofactor.

It catalyses the reaction 2 ATP = 3',3'-c-di-AMP + 2 diphosphate. Functionally, participates in a DNA-damage check-point that is active prior to asymmetric division when DNA is damaged. DisA forms globular foci that rapidly scan along the chromosomes during sporulation, searching for lesions. When a lesion is present, DisA pauses at the lesion site. This triggers a cellular response that culminates in a temporary block in sporulation initiation. Its function is as follows. Also has diadenylate cyclase activity, catalyzing the condensation of 2 ATP molecules into cyclic di-AMP (c-di-AMP). c-di-AMP acts as a signaling molecule that couples DNA integrity with progression of sporulation. The rise in c-di-AMP level generated by DisA while scanning the chromosome, operates as a positive signal that advances sporulation; upon encountering a lesion, the DisA focus arrests at the damaged site and halts c-di-AMP synthesis. This Clostridium perfringens (strain 13 / Type A) protein is DNA integrity scanning protein DisA.